The sequence spans 459 residues: Ribulose bisphosphate carboxylase large chain (459 aa).

Positions 1-2 (MS) are excised as a propeptide. At proline 3 the chain carries N-acetylproline. Lysine 14 carries the N6,N6,N6-trimethyllysine modification. Substrate contacts are provided by asparagine 123 and threonine 173. Lysine 175 acts as the Proton acceptor in catalysis. A substrate-binding site is contributed by lysine 177. The Mg(2+) site is built by lysine 201, aspartate 203, and glutamate 204. Residue lysine 201 is modified to N6-carboxylysine. Histidine 294 functions as the Proton acceptor in the catalytic mechanism. Residues arginine 295, histidine 327, and serine 379 each coordinate substrate.

This sequence belongs to the RuBisCO large chain family. Type I subfamily. In terms of assembly, heterohexadecamer of 8 large chains and 8 small chains; disulfide-linked. The disulfide link is formed within the large subunit homodimers. Requires Mg(2+) as cofactor. Post-translationally, the disulfide bond which can form in the large chain dimeric partners within the hexadecamer appears to be associated with oxidative stress and protein turnover.

The protein resides in the plastid. Its subcellular location is the chloroplast. It carries out the reaction 2 (2R)-3-phosphoglycerate + 2 H(+) = D-ribulose 1,5-bisphosphate + CO2 + H2O. The catalysed reaction is D-ribulose 1,5-bisphosphate + O2 = 2-phosphoglycolate + (2R)-3-phosphoglycerate + 2 H(+). Its function is as follows. RuBisCO catalyzes two reactions: the carboxylation of D-ribulose 1,5-bisphosphate, the primary event in carbon dioxide fixation, as well as the oxidative fragmentation of the pentose substrate in the photorespiration process. Both reactions occur simultaneously and in competition at the same active site. This is Ribulose bisphosphate carboxylase large chain from Streptopus lanceolatus (Rose twisted stalk).